A 308-amino-acid chain; its full sequence is MIDRFGRPLEDLRITLTHVCNFECFFCHMEGEEGDNYILSKEDILLVAKVAKNFDINSVKLTGGEPTLRRDLVEIVRGLKQLGYRDVSMTTNGFLLKDLAYKLKLAGLDRINVSLHAISRETFKKITGVDAFDRVIEGIKSAIDVGLVPVKLNFVVNRRNREEVFKFIELSQNLGVNEIHLIELHPVGLGKLAFKEHDDLREIEEYIEKISIKKQIRKKHFRPRYVLPSGLIVEVIKPYANPIFCAGCNRIRLSVDGKLKTCLYREDNVIDILDILKGEYSEDVKEELLGRAFMIAIAIREPNFKYKI.

Residues 4-224 form the Radical SAM core domain; the sequence is RFGRPLEDLR…QIRKKHFRPR (221 aa). Arginine 13 contacts GTP. [4Fe-4S] cluster is bound by residues cysteine 20, cysteine 24, and cysteine 27. Residue lysine 60 coordinates GTP. S-adenosyl-L-methionine is bound at residue glycine 64. Threonine 90 serves as a coordination point for GTP. Serine 114 contributes to the S-adenosyl-L-methionine binding site. Residue lysine 151 participates in GTP binding. Residues cysteine 245 and cysteine 248 each coordinate [4Fe-4S] cluster. Residue 250–252 coordinates GTP; that stretch reads RIR. Cysteine 262 lines the [4Fe-4S] cluster pocket.

The protein belongs to the radical SAM superfamily. MoaA family. Requires [4Fe-4S] cluster as cofactor.

The catalysed reaction is GTP + AH2 + S-adenosyl-L-methionine = (8S)-3',8-cyclo-7,8-dihydroguanosine 5'-triphosphate + 5'-deoxyadenosine + L-methionine + A + H(+). It functions in the pathway cofactor biosynthesis; molybdopterin biosynthesis. Catalyzes the cyclization of GTP to (8S)-3',8-cyclo-7,8-dihydroguanosine 5'-triphosphate. This chain is Probable GTP 3',8-cyclase, found in Saccharolobus islandicus (strain L.S.2.15 / Lassen #1) (Sulfolobus islandicus).